An 891-amino-acid polypeptide reads, in one-letter code: MFKNRLTPILFALFIIVPALTYLLAYYTDWLFFVETGFASVFTTKLYAQTGIGVLFGGLLFAFLVPNLLYANRAEFPHAGEYIEAGAIRLQRNQTLPMIRPIGVLIAAGIALFVGQFGALQWENVLLFINRVSVGTTDPVIGKDIGFYLFSLPLLEILRGYLNFMLLATLLVTLLVYYIRGGIALTLRGLLIAQQVRRHTAILLALFSCVIAAGFYLEGFGLLYGNKGAFYGAGYVDVNVRLTTLTTLAFITPVAGLLLAFGLWKGTWRLVLLPPIVVVAAYMIGMRGYPALLQKFKVAPNELALETPYIEHNINFTRFGYDLKKIETVPFDVDTRLSAAEIANNDATIKNIRLWDHAPLLKTYSQLQQIRTYYKFFDVDNDRYMVNGQYSQVMLSPRELSYADLPSKNWINERLIFTHGNGITMGPVSRISKEGLPEFYIKDIPAVSLADIKVTRPEIYFGELSNDYVIVKTRVPEFSYPTATGNINTTYNGKGGVAVDSLLKKALFAAHFRTEKIVLSSDITSESRILYNRNISKRVKKLAPFLRFDADPYMVVDDKGKLKWIIDAYTHSYRLPYSKPLKGGINYMRNSVKAVVDAYDGAVDFYISDPDDVLLKVYAKIFPALFKPMAAMPDGLKTHVRYSHQFLQVQAAMFSTYHMTDPKVFYNKENLWEIPVLGEKQMEPYYTIMKLPGEKKEEYILLLPFSPSKRDNLAAWLTARCDGENYGKIKAYTFPRDRLIYGPKQIDARINQDSYISQQLTLWNQRGSEVIRGSMLVIPIEKSLLYVQPLFLAADKSGLPELRRVIVAFGDEVVMEETLELALQRIFGGKRPAAATATQSTAPDAKALPSTLAKEAMSLYERAINMQRQGNWSGYGEELRKLEQVLKQLAK.

The next 7 membrane-spanning stretches (helical) occupy residues 6–26, 51–71, 102–122, 164–184, 202–222, 244–264, and 266–286; these read LTPI…LLAY, GIGV…LLYA, IGVL…ALQW, FMLL…GGIA, ILLA…GFGL, TLTT…FGLW, and GTWR…MIGM.

Belongs to the UPF0182 family.

It localises to the cell membrane. The sequence is that of UPF0182 protein Glov_0814 from Trichlorobacter lovleyi (strain ATCC BAA-1151 / DSM 17278 / SZ) (Geobacter lovleyi).